The following is a 158-amino-acid chain: MSKKSKKPENQICANKKARHEYFIEETFEAGLSLQGWEVKAIRAGKMTITEAYIIFRNNEAFLFGAHIQPLLSSSTHVSPDSIRTRKLLLNRREIEKLFGAVNQKGYACVPLSCYWKNSLVKCQIGLALGKKQHDKRKTLKDRDWERDKQRGFKKDLD.

Residues 135-158 (DKRKTLKDRDWERDKQRGFKKDLD) are disordered. Positions 141–158 (KDRDWERDKQRGFKKDLD) are enriched in basic and acidic residues.

The protein belongs to the SmpB family.

The protein resides in the cytoplasm. Functionally, required for rescue of stalled ribosomes mediated by trans-translation. Binds to transfer-messenger RNA (tmRNA), required for stable association of tmRNA with ribosomes. tmRNA and SmpB together mimic tRNA shape, replacing the anticodon stem-loop with SmpB. tmRNA is encoded by the ssrA gene; the 2 termini fold to resemble tRNA(Ala) and it encodes a 'tag peptide', a short internal open reading frame. During trans-translation Ala-aminoacylated tmRNA acts like a tRNA, entering the A-site of stalled ribosomes, displacing the stalled mRNA. The ribosome then switches to translate the ORF on the tmRNA; the nascent peptide is terminated with the 'tag peptide' encoded by the tmRNA and targeted for degradation. The ribosome is freed to recommence translation, which seems to be the essential function of trans-translation. This is SsrA-binding protein from Psychrobacter arcticus (strain DSM 17307 / VKM B-2377 / 273-4).